The following is a 226-amino-acid chain: MTVLCVTGTCTGVGKTVVTAALASQANQAGIDVVVCKPVQTGTGIGDDDLAEIGRLSGVTELVGLARYPLPMAPVAAAEQAGQPLPSRDQLVQHIRGLDRPGRLTLVEGAGGLLVELADSGGTLRDLAVDLGAAMLVVVAAGLGTLNHTALTLEALAAQKVSCAGLVLGSWPAHPGLVESSNRDALARLAPMRAVLSAGAAQLSVADFAVMSAGAFDREWVATLVG.

An ATP-binding site is contributed by 12–17 (GVGKTV). Residue Thr16 coordinates Mg(2+). Lys37 is a catalytic residue. Thr41 lines the substrate pocket. Residues Asp49, 108 to 111 (EGAG), and 169 to 170 (GS) each bind ATP. Mg(2+) contacts are provided by Asp49 and Glu108.

The protein belongs to the dethiobiotin synthetase family. Homodimer. Mg(2+) serves as cofactor.

It is found in the cytoplasm. The catalysed reaction is (7R,8S)-7,8-diammoniononanoate + CO2 + ATP = (4R,5S)-dethiobiotin + ADP + phosphate + 3 H(+). It participates in cofactor biosynthesis; biotin biosynthesis; biotin from 7,8-diaminononanoate: step 1/2. Catalyzes a mechanistically unusual reaction, the ATP-dependent insertion of CO2 between the N7 and N8 nitrogen atoms of 7,8-diaminopelargonic acid (DAPA, also called 7,8-diammoniononanoate) to form a ureido ring. This Mycobacterium marinum (strain ATCC BAA-535 / M) protein is ATP-dependent dethiobiotin synthetase BioD.